The sequence spans 512 residues: GMP synthase [glutamine-hydrolyzing] (512 aa).

A Glutamine amidotransferase type-1 domain is found at 5 to 195 (GIVILDFGSQ…IFGIAKAEKN (191 aa)). Catalysis depends on C82, which acts as the Nucleophile. Residues H169 and E171 contribute to the active site. A GMPS ATP-PPase domain is found at 196–387 (WSMENYIEST…LGIPDYMVDR (192 aa)). Position 223-229 (223-229 (SGGVDSS)) interacts with ATP.

Homodimer.

It catalyses the reaction XMP + L-glutamine + ATP + H2O = GMP + L-glutamate + AMP + diphosphate + 2 H(+). It functions in the pathway purine metabolism; GMP biosynthesis; GMP from XMP (L-Gln route): step 1/1. In terms of biological role, catalyzes the synthesis of GMP from XMP. This Fusobacterium nucleatum subsp. nucleatum (strain ATCC 25586 / DSM 15643 / BCRC 10681 / CIP 101130 / JCM 8532 / KCTC 2640 / LMG 13131 / VPI 4355) protein is GMP synthase [glutamine-hydrolyzing].